The sequence spans 415 residues: Levansucrase (415 aa).

Positions 45, 46, 132, 202, and 203 each coordinate sucrose. The active-site Nucleophile is the aspartate 46. Glutamate 287 acts as the Proton donor/acceptor in catalysis.

The protein belongs to the glycosyl hydrolase 68 family.

It localises to the secreted. The enzyme catalyses [6)-beta-D-fructofuranosyl-(2-&gt;](n) alpha-D-glucopyranoside + sucrose = [6)-beta-D-fructofuranosyl-(2-&gt;](n+1) alpha-D-glucopyranoside + D-glucose. Functionally, catalyzes the synthesis of levan, a fructose polymer, by transferring the fructosyl moiety from sucrose to a growing acceptor molecule. The chain is Levansucrase from Erwinia amylovora (Fire blight bacteria).